The primary structure comprises 141 residues: 3-hydroxyacyl-[acyl-carrier-protein] dehydratase FabZ (141 aa).

The active site involves His-48.

This sequence belongs to the thioester dehydratase family. FabZ subfamily.

It localises to the cytoplasm. It catalyses the reaction a (3R)-hydroxyacyl-[ACP] = a (2E)-enoyl-[ACP] + H2O. In terms of biological role, involved in unsaturated fatty acids biosynthesis. Catalyzes the dehydration of short chain beta-hydroxyacyl-ACPs and long chain saturated and unsaturated beta-hydroxyacyl-ACPs. The sequence is that of 3-hydroxyacyl-[acyl-carrier-protein] dehydratase FabZ from Streptococcus thermophilus (strain CNRZ 1066).